We begin with the raw amino-acid sequence, 29 residues long: Cycloviolacin-H2 (29 aa).

The segment at residues 1-29 (SAIACGESCVYIPCFIPGCSCRNRVCYLN) is a cross-link (cyclopeptide (Ser-Asn)). Intrachain disulfides connect cysteine 5/cysteine 19, cysteine 9/cysteine 21, and cysteine 14/cysteine 26.

In terms of processing, this is a cyclic peptide.

In terms of biological role, probably participates in a plant defense mechanism. The protein is Cycloviolacin-H2 of Viola hederacea (Australian violet).